Consider the following 312-residue polypeptide: Ribosomal RNA small subunit methyltransferase H (312 aa).

S-adenosyl-L-methionine-binding positions include 37 to 39 (GGH), Asp-57, Phe-83, and Asp-104.

The protein belongs to the methyltransferase superfamily. RsmH family.

It is found in the cytoplasm. The catalysed reaction is cytidine(1402) in 16S rRNA + S-adenosyl-L-methionine = N(4)-methylcytidine(1402) in 16S rRNA + S-adenosyl-L-homocysteine + H(+). Specifically methylates the N4 position of cytidine in position 1402 (C1402) of 16S rRNA. The protein is Ribosomal RNA small subunit methyltransferase H of Malacoplasma penetrans (strain HF-2) (Mycoplasma penetrans).